Consider the following 769-residue polypeptide: DNA gyrase subunit B (769 aa).

One can recognise a Toprim domain in the interval 414–528; that stretch reads SEIYLVEGDS…NGHIYLAQPP (115 aa). Mg(2+) is bound by residues Glu420, Asp493, and Asp495.

This sequence belongs to the type II topoisomerase GyrB family. As to quaternary structure, heterotetramer, composed of two GyrA and two GyrB chains. In the heterotetramer, GyrA contains the active site tyrosine that forms a transient covalent intermediate with DNA, while GyrB binds cofactors and catalyzes ATP hydrolysis. Requires Mg(2+) as cofactor. Mn(2+) serves as cofactor. The cofactor is Ca(2+).

The protein localises to the cytoplasm. It carries out the reaction ATP-dependent breakage, passage and rejoining of double-stranded DNA.. Its function is as follows. A type II topoisomerase that negatively supercoils closed circular double-stranded (ds) DNA in an ATP-dependent manner to modulate DNA topology and maintain chromosomes in an underwound state. Negative supercoiling favors strand separation, and DNA replication, transcription, recombination and repair, all of which involve strand separation. Also able to catalyze the interconversion of other topological isomers of dsDNA rings, including catenanes and knotted rings. Type II topoisomerases break and join 2 DNA strands simultaneously in an ATP-dependent manner. This is DNA gyrase subunit B from Campylobacter jejuni subsp. jejuni serotype O:2 (strain ATCC 700819 / NCTC 11168).